The chain runs to 582 residues: Formate--tetrahydrofolate ligase (582 aa).

Position 65-72 (threonine 65–threonine 72) interacts with ATP.

The protein belongs to the formate--tetrahydrofolate ligase family.

The enzyme catalyses (6S)-5,6,7,8-tetrahydrofolate + formate + ATP = (6R)-10-formyltetrahydrofolate + ADP + phosphate. It functions in the pathway one-carbon metabolism; tetrahydrofolate interconversion. This is Formate--tetrahydrofolate ligase from Vibrio atlanticus (strain LGP32) (Vibrio splendidus (strain Mel32)).